Here is a 222-residue protein sequence, read N- to C-terminus: Leucyl/phenylalanyl-tRNA--protein transferase (222 aa).

This sequence belongs to the L/F-transferase family.

Its subcellular location is the cytoplasm. The enzyme catalyses N-terminal L-lysyl-[protein] + L-leucyl-tRNA(Leu) = N-terminal L-leucyl-L-lysyl-[protein] + tRNA(Leu) + H(+). It catalyses the reaction N-terminal L-arginyl-[protein] + L-leucyl-tRNA(Leu) = N-terminal L-leucyl-L-arginyl-[protein] + tRNA(Leu) + H(+). It carries out the reaction L-phenylalanyl-tRNA(Phe) + an N-terminal L-alpha-aminoacyl-[protein] = an N-terminal L-phenylalanyl-L-alpha-aminoacyl-[protein] + tRNA(Phe). In terms of biological role, functions in the N-end rule pathway of protein degradation where it conjugates Leu, Phe and, less efficiently, Met from aminoacyl-tRNAs to the N-termini of proteins containing an N-terminal arginine or lysine. The protein is Leucyl/phenylalanyl-tRNA--protein transferase of Legionella pneumophila (strain Lens).